Here is a 284-residue protein sequence, read N- to C-terminus: MAQEKMELDLELPAGASPAEGGGPGGGGLRRSNSAPLIHGLSDSSPVFQAEAPSARRNSTTFPSRHGLLLPASPVRMHSSRLHQIKQEEGMDLINRETVHEREVQTAMQISHSWEESFSLSDNDVEKSASPKRIDFIPVSPAPSPTRGIGKQCFSPSLQSFVSSNGLPPSPIPSPTTRFTTRRSQSPINCIRPSVLGPLKRKCEMETDYQPKRFFQGITNMLSSDVAQLSDPGVCVSSDTLDGNSSSAGSSCNSPAKVSTTTDSPVSPAQAASPFIPVDELSSK.

The disordered stretch occupies residues 1 to 65 (MAQEKMELDL…RRNSTTFPSR (65 aa)). Residues 20-29 (EGGGPGGGGL) show a composition bias toward gly residues. Phosphoserine is present on serine 32. Serine 34 is subject to Phosphoserine; by CHEK1. Phosphoserine occurs at positions 42, 45, 59, and 73. Lysine 86 participates in a covalent cross-link: Glycyl lysine isopeptide (Lys-Gly) (interchain with G-Cter in SUMO1). Phosphoserine is present on residues serine 140 and serine 144. Position 146 is a phosphothreonine (threonine 146). Residues 164 to 185 (SNGLPPSPIPSPTTRFTTRRSQ) form a disordered region. Residues 175 to 185 (PTTRFTTRRSQ) show a composition bias toward low complexity. 2 positions are modified to phosphoserine: serine 184 and serine 186. The interval 233–284 (GVCVSSDTLDGNSSSAGSSCNSPAKVSTTTDSPVSPAQAASPFIPVDELSSK) is disordered. The span at 243–254 (GNSSSAGSSCNS) shows a compositional bias: low complexity. The span at 256 to 267 (AKVSTTTDSPVS) shows a compositional bias: polar residues. Residues serine 264, serine 267, and serine 273 each carry the phosphoserine modification.

Belongs to the FAM122 family. In terms of assembly, interacts with PPP2CA and PPP2R1A. Interacts (via its N-terminus) with PPP2R2A; the interaction is direct and this interaction inhibits PP2A activity. The CHEK1-mediated Ser-34 phosphorylated form interacts with 14-3-3 proteins. In terms of processing, CHEK1-mediated phosphorylation at Ser-34 negatively regulates its ability to inhibit serine/threonine-protein phosphatase 2A (PP2A) activity. Phosphorylation leads to its release from the PP2A complex and its sequestration by 14-3-3 proteins in the cytoplasm resulting in its inability to translocate to the nucleus, where it otherwise inhibits PP2A.

The protein resides in the nucleus. It is found in the cytoplasm. Acts as an inhibitor of serine/threonine-protein phosphatase 2A (PP2A) activity. Inhibits PP2A activity by blocking the substrate binding site on PPP2R2A and the active site of PPP2CA. Potentiates ubiquitin-mediated proteasomal degradation of serine/threonine-protein phosphatase 2A catalytic subunit alpha (PPP2CA). Inhibits PP2A-mediated dephosphorylation of WEE1, promoting ubiquitin-mediated proteolysis of WEE1, thereby releasing G2/M checkpoint. This chain is P2R1A-PPP2R2A-interacting phosphatase regulator 1, found in Mus musculus (Mouse).